A 402-amino-acid polypeptide reads, in one-letter code: Multidrug resistance protein MdtH (402 aa).

The Cytoplasmic portion of the chain corresponds to 1–12 (MSRVSQARNLGK). Residues 13–33 (YFLLIDNMLVVLGFFVVFPLI) traverse the membrane as a helical segment. Over 34 to 98 (SIRFVDQMGW…GFATMGIAHE (65 aa)) the chain is Periplasmic. Residues 99–116 (PWLLWFSCLLSGLGGTLF) traverse the membrane as a helical segment. Residues 117–138 (DPPRSALVVKLIRPQQRGRFFS) are Cytoplasmic-facing. A helical membrane pass occupies residues 139–159 (LLMMQDSAGAVIGALLGSWLL). The Periplasmic portion of the chain corresponds to 160–164 (QYDFR). The chain crosses the membrane as a helical span at residues 165 to 185 (LVCATGAVLFVLCAAFNAWLL). The Cytoplasmic segment spans residues 186-213 (PAWKLSTVRTPVREGMTRVMRDKRFVTY). A helical transmembrane segment spans residues 214-234 (VLTLAGYYMLAVQVMLMLPIM). Topologically, residues 235–243 (VNDVAGAPS) are periplasmic. The helical transmembrane segment at 244-264 (AVKWMYAIEACLSLTLLYPIA) threads the bilayer. Residues 265–276 (RWSEKHFRLEHR) lie on the Cytoplasmic side of the membrane. A helical transmembrane segment spans residues 277-297 (LMAGLLIMSLSMMPVGMVSGL). The Periplasmic segment spans residues 298-299 (QQ). The chain crosses the membrane as a helical span at residues 300–320 (LFTLICLFYIGSIIAEPARET). The Cytoplasmic portion of the chain corresponds to 321–339 (LSASLADARARGSYMGCSR). Residues 340 to 360 (LGLAIGGAIGYIGGGWLFDLG) form a helical membrane-spanning segment. Residues 361 to 367 (KSAHQPE) are Periplasmic-facing. The helical transmembrane segment at 368–388 (LPWMMLGIIGIFTFLALGWQF) threads the bilayer. Topologically, residues 389–402 (SQKRAARRLLERDA) are cytoplasmic.

The protein belongs to the major facilitator superfamily. DHA1 family. MdtH (TC 2.A.1.2.21) subfamily.

It localises to the cell inner membrane. Confers resistance to norfloxacin and enoxacin. The protein is Multidrug resistance protein MdtH of Escherichia coli (strain SE11).